Here is a 144-residue protein sequence, read N- to C-terminus: Transcription antitermination protein NusB (144 aa).

It belongs to the NusB family.

Its function is as follows. Involved in transcription antitermination. Required for transcription of ribosomal RNA (rRNA) genes. Binds specifically to the boxA antiterminator sequence of the ribosomal RNA (rrn) operons. In Streptomyces avermitilis (strain ATCC 31267 / DSM 46492 / JCM 5070 / NBRC 14893 / NCIMB 12804 / NRRL 8165 / MA-4680), this protein is Transcription antitermination protein NusB.